Consider the following 261-residue polypeptide: 3'-5' ssDNA/RNA exonuclease TatD (261 aa).

A divalent metal cation is bound by residues Glu-92, His-128, and His-153.

It belongs to the metallo-dependent hydrolases superfamily. TatD-type hydrolase family. TatD subfamily. In terms of assembly, monomer. Mg(2+) is required as a cofactor.

It is found in the cytoplasm. 3'-5' exonuclease that prefers single-stranded DNA and RNA. May play a role in the H(2)O(2)-induced DNA damage repair. In Erwinia billingiae (strain Eb661), this protein is 3'-5' ssDNA/RNA exonuclease TatD.